The following is a 421-amino-acid chain: Gamma-glutamyl phosphate reductase (421 aa).

It belongs to the gamma-glutamyl phosphate reductase family.

The protein localises to the cytoplasm. The enzyme catalyses L-glutamate 5-semialdehyde + phosphate + NADP(+) = L-glutamyl 5-phosphate + NADPH + H(+). It participates in amino-acid biosynthesis; L-proline biosynthesis; L-glutamate 5-semialdehyde from L-glutamate: step 2/2. In terms of biological role, catalyzes the NADPH-dependent reduction of L-glutamate 5-phosphate into L-glutamate 5-semialdehyde and phosphate. The product spontaneously undergoes cyclization to form 1-pyrroline-5-carboxylate. The protein is Gamma-glutamyl phosphate reductase of Acinetobacter baumannii (strain ATCC 17978 / DSM 105126 / CIP 53.77 / LMG 1025 / NCDC KC755 / 5377).